The sequence spans 301 residues: MDGIIPLYKERGMTSFACVSRLRQILKTKKIGHSGTLDPGVAGVLPICVGNATKVVDYLMQSGKQYQGELLIGFATTTQDLDGDKIEEKVVADEIPTSEILSAMNSLTGTIIQIPPMYSAVKVNGKKLYEYARAGETVERPKRQVTISKFELLSSKYDKKNKQQRIRFNVECSKGTYIRTLVVDLARKLGYPGVMSLLTRLKSGGFTLDQTLSLDDVRDAVATQTLQQYLYPLDYALKDYPQLTIQVAQWKKVQNGGWLSPSELNTSEKEIVLSFDGQVKALYHFDPKNKMYKPTKMFAVN.

Asp38 acts as the Nucleophile in catalysis.

The protein belongs to the pseudouridine synthase TruB family. Type 1 subfamily.

It catalyses the reaction uridine(55) in tRNA = pseudouridine(55) in tRNA. Its function is as follows. Responsible for synthesis of pseudouridine from uracil-55 in the psi GC loop of transfer RNAs. This is tRNA pseudouridine synthase B from Limosilactobacillus reuteri (strain DSM 20016) (Lactobacillus reuteri).